A 241-amino-acid polypeptide reads, in one-letter code: Small ribosomal subunit protein uS3 (241 aa).

The 70-residue stretch at 39–108 (IREGVLKLLK…NLKVEVKVIE (70 aa)) folds into the KH type-2 domain. Residues 215-241 (SQRVSEKAPMNNDRRFNNKNNNRGGRK) form a disordered region. Residues 232–241 (NKNNNRGGRK) are compositionally biased toward low complexity.

Belongs to the universal ribosomal protein uS3 family. In terms of assembly, part of the 30S ribosomal subunit. Forms a tight complex with proteins S10 and S14.

Functionally, binds the lower part of the 30S subunit head. Binds mRNA in the 70S ribosome, positioning it for translation. The chain is Small ribosomal subunit protein uS3 from Mesoplasma florum (Acholeplasma florum).